The following is a 497-amino-acid chain: Serine hydroxymethyltransferase (497 aa).

Residues leucine 176 and 180-182 contribute to the (6S)-5,6,7,8-tetrahydrofolate site; that span reads GHL. Lysine 289 bears the N6-(pyridoxal phosphate)lysine mark.

It belongs to the SHMT family. Homodimer. Pyridoxal 5'-phosphate is required as a cofactor.

The protein localises to the cytoplasm. The enzyme catalyses (6R)-5,10-methylene-5,6,7,8-tetrahydrofolate + glycine + H2O = (6S)-5,6,7,8-tetrahydrofolate + L-serine. It functions in the pathway one-carbon metabolism; tetrahydrofolate interconversion. It participates in amino-acid biosynthesis; glycine biosynthesis; glycine from L-serine: step 1/1. In terms of biological role, catalyzes the reversible interconversion of serine and glycine with tetrahydrofolate (THF) serving as the one-carbon carrier. This reaction serves as the major source of one-carbon groups required for the biosynthesis of purines, thymidylate, methionine, and other important biomolecules. Also exhibits THF-independent aldolase activity toward beta-hydroxyamino acids, producing glycine and aldehydes, via a retro-aldol mechanism. In Chlamydia abortus (strain DSM 27085 / S26/3) (Chlamydophila abortus), this protein is Serine hydroxymethyltransferase.